The following is a 30-amino-acid chain: Ribonuclease pancreatic (30 aa).

Residues 1 to 13 (KETAAAKFERQHM) are compositionally biased toward basic and acidic residues. Positions 1–21 (KETAAAKFERQHMDPAPAAAX) are disordered. Residues Lys-7 and Arg-10 each coordinate substrate. The active-site Proton acceptor is the His-12.

The protein belongs to the pancreatic ribonuclease family. Monomer. Interacts with and forms tight 1:1 complexes with RNH1. Dimerization of two such complexes may occur. Interaction with RNH1 inhibits this protein. As to expression, pancreas.

It localises to the secreted. The catalysed reaction is an [RNA] containing cytidine + H2O = an [RNA]-3'-cytidine-3'-phosphate + a 5'-hydroxy-ribonucleotide-3'-[RNA].. It catalyses the reaction an [RNA] containing uridine + H2O = an [RNA]-3'-uridine-3'-phosphate + a 5'-hydroxy-ribonucleotide-3'-[RNA].. In terms of biological role, endonuclease that catalyzes the cleavage of RNA on the 3' side of pyrimidine nucleotides. Acts on single-stranded and double-stranded RNA. This Odocoileus virginianus virginianus (Virginia white-tailed deer) protein is Ribonuclease pancreatic (RNASE1).